We begin with the raw amino-acid sequence, 363 residues long: 3-isopropylmalate dehydrogenase (363 aa).

78 to 91 (GPKWEHLPPAEQPE) provides a ligand contact to NAD(+). Residues Arg-99, Arg-109, Arg-138, and Asp-227 each contribute to the substrate site. Mg(2+) is bound by residues Asp-227, Asp-251, and Asp-255. 285–297 (GSAPDIAGKDIAN) contacts NAD(+).

Belongs to the isocitrate and isopropylmalate dehydrogenases family. LeuB type 1 subfamily. Homodimer. Mg(2+) is required as a cofactor. It depends on Mn(2+) as a cofactor.

The protein resides in the cytoplasm. It carries out the reaction (2R,3S)-3-isopropylmalate + NAD(+) = 4-methyl-2-oxopentanoate + CO2 + NADH. It functions in the pathway amino-acid biosynthesis; L-leucine biosynthesis; L-leucine from 3-methyl-2-oxobutanoate: step 3/4. In terms of biological role, catalyzes the oxidation of 3-carboxy-2-hydroxy-4-methylpentanoate (3-isopropylmalate) to 3-carboxy-4-methyl-2-oxopentanoate. The product decarboxylates to 4-methyl-2 oxopentanoate. The chain is 3-isopropylmalate dehydrogenase from Pectobacterium atrosepticum (strain SCRI 1043 / ATCC BAA-672) (Erwinia carotovora subsp. atroseptica).